The primary structure comprises 184 residues: Photosystem I assembly protein Ycf4 (184 aa).

Transmembrane regions (helical) follow at residues 22–42 (FCWAFILFLGSLGFLLVGTSS) and 57–77 (IIFFPQGIVMSFYGIAGLFIS).

It belongs to the Ycf4 family.

It localises to the plastid. Its subcellular location is the chloroplast thylakoid membrane. Its function is as follows. Seems to be required for the assembly of the photosystem I complex. This chain is Photosystem I assembly protein Ycf4, found in Draba nemorosa (Woodland whitlowgrass).